Here is a 288-residue protein sequence, read N- to C-terminus: uncharacterized protein (288 aa).

This is an uncharacterized protein from Mycobacterium tuberculosis (strain CDC 1551 / Oshkosh).